Reading from the N-terminus, the 497-residue chain is Probable malate:quinone oxidoreductase (497 aa).

The protein belongs to the MQO family. The cofactor is FAD.

It catalyses the reaction (S)-malate + a quinone = a quinol + oxaloacetate. It participates in carbohydrate metabolism; tricarboxylic acid cycle; oxaloacetate from (S)-malate (quinone route): step 1/1. This chain is Probable malate:quinone oxidoreductase, found in Rhodopseudomonas palustris (strain ATCC BAA-98 / CGA009).